The sequence spans 172 residues: MTQAASGIDLFIPEVYDIVWSLIILVIVAVFFYKFFMPKFNAIFDERAAKIQGNIAKAEQARKDADEAKAKYEAQLSTARVDAAKIRDDARAEASHIIADARSRAESDAAQITASAQRSIESQHQQAIVSLKGEVGALATALAGKILGAKLEDNDVQSSMIDSMIDDLGAKK.

A helical membrane pass occupies residues 18–38 (IVWSLIILVIVAVFFYKFFMP).

This sequence belongs to the ATPase B chain family. In terms of assembly, F-type ATPases have 2 components, F(1) - the catalytic core - and F(0) - the membrane proton channel. F(1) has five subunits: alpha(3), beta(3), gamma(1), delta(1), epsilon(1). F(0) has three main subunits: a(1), b(2) and c(10-14). The alpha and beta chains form an alternating ring which encloses part of the gamma chain. F(1) is attached to F(0) by a central stalk formed by the gamma and epsilon chains, while a peripheral stalk is formed by the delta and b chains.

It localises to the cell membrane. Its function is as follows. F(1)F(0) ATP synthase produces ATP from ADP in the presence of a proton or sodium gradient. F-type ATPases consist of two structural domains, F(1) containing the extramembraneous catalytic core and F(0) containing the membrane proton channel, linked together by a central stalk and a peripheral stalk. During catalysis, ATP synthesis in the catalytic domain of F(1) is coupled via a rotary mechanism of the central stalk subunits to proton translocation. Component of the F(0) channel, it forms part of the peripheral stalk, linking F(1) to F(0). The sequence is that of ATP synthase subunit b from Bifidobacterium longum (strain DJO10A).